Reading from the N-terminus, the 418-residue chain is 3-phosphoshikimate 1-carboxyvinyltransferase (418 aa).

Residues lysine 26, serine 27, and arginine 31 each coordinate 3-phosphoshikimate. Lysine 26 lines the phosphoenolpyruvate pocket. Phosphoenolpyruvate is bound by residues glycine 97 and arginine 125. Residues serine 170, serine 171, glutamine 172, aspartate 297, asparagine 320, and lysine 324 each coordinate 3-phosphoshikimate. Glutamine 172 lines the phosphoenolpyruvate pocket. Aspartate 297 serves as the catalytic Proton acceptor. The phosphoenolpyruvate site is built by arginine 328, arginine 375, and lysine 400.

This sequence belongs to the EPSP synthase family. As to quaternary structure, monomer.

The protein resides in the cytoplasm. It carries out the reaction 3-phosphoshikimate + phosphoenolpyruvate = 5-O-(1-carboxyvinyl)-3-phosphoshikimate + phosphate. The protein operates within metabolic intermediate biosynthesis; chorismate biosynthesis; chorismate from D-erythrose 4-phosphate and phosphoenolpyruvate: step 6/7. Functionally, catalyzes the transfer of the enolpyruvyl moiety of phosphoenolpyruvate (PEP) to the 5-hydroxyl of shikimate-3-phosphate (S3P) to produce enolpyruvyl shikimate-3-phosphate and inorganic phosphate. In Pseudomonas syringae pv. syringae (strain B728a), this protein is 3-phosphoshikimate 1-carboxyvinyltransferase.